Here is a 500-residue protein sequence, read N- to C-terminus: MLDNRKFSEQELVRRNKYKTLVEQNKDPYKVTNWKRNTTLLKLNEKYKDYSKEDLLNLNQELVVVAGRIKLYREAGKKAAFVNIDDQDSSIQLYVRLDEIGDQSFEDFRNFDLGDIIGVKGIMMRTDHGELSIRCKEVVLLSKALRPLPDKHAGIQDIEEKYRRRYVDLIVNHDVRKTFQARTKIIRTLQNFLDNKGYMEVETPILHSLKGGASAKPFITHYNVLNTDVYLRIATELHLKRLIVGGFEGVYEIGRIFRNEGMSTRHNPEFTSIELYVAYEDMFFLMNLTEEIFRVCNAAVNSNSIIEYNNVKIDLSKPFKRLHMVDGIKQVTGVDFWKEMTVQQALELAKKHKVHVEKHQESVGHIINLFYEEFVESTIVEPTFVYGHPKEISPLAKSNPSDPRFTDRFELFILGREYANAFSELNDPIDQYERFKAQIEEESKGNDEANDMDIDFIEALEHAMPPTAGIGIGIDRLVMLLTNSESIKDVLLFPQMKPRE.

Glu410 and Glu417 together coordinate Mg(2+).

It belongs to the class-II aminoacyl-tRNA synthetase family. As to quaternary structure, homodimer. Mg(2+) is required as a cofactor.

The protein resides in the cytoplasm. It catalyses the reaction tRNA(Lys) + L-lysine + ATP = L-lysyl-tRNA(Lys) + AMP + diphosphate. This Mycoplasma mycoides subsp. mycoides SC (strain CCUG 32753 / NCTC 10114 / PG1) protein is Lysine--tRNA ligase.